The chain runs to 196 residues: NADH-quinone oxidoreductase subunit C (196 aa).

Belongs to the complex I 30 kDa subunit family. In terms of assembly, NDH-1 is composed of 14 different subunits. Subunits NuoB, C, D, E, F, and G constitute the peripheral sector of the complex.

The protein resides in the cell inner membrane. It carries out the reaction a quinone + NADH + 5 H(+)(in) = a quinol + NAD(+) + 4 H(+)(out). In terms of biological role, NDH-1 shuttles electrons from NADH, via FMN and iron-sulfur (Fe-S) centers, to quinones in the respiratory chain. The immediate electron acceptor for the enzyme in this species is believed to be ubiquinone. Couples the redox reaction to proton translocation (for every two electrons transferred, four hydrogen ions are translocated across the cytoplasmic membrane), and thus conserves the redox energy in a proton gradient. The protein is NADH-quinone oxidoreductase subunit C of Rickettsia bellii (strain RML369-C).